The primary structure comprises 146 residues: Large ribosomal subunit protein mL41 (146 aa).

The transit peptide at Met-1–Ala-16 directs the protein to the mitochondrion.

It belongs to the mitochondrion-specific ribosomal protein mL41 family. As to quaternary structure, component of the mitochondrial large ribosomal subunit (mt-LSU). Mature yeast 74S mitochondrial ribosomes consist of a small (37S) and a large (54S) subunit. The 37S small subunit contains a 15S ribosomal RNA (15S mt-rRNA) and 34 different proteins. The 54S large subunit contains a 21S rRNA (21S mt-rRNA) and 46 different proteins.

Its subcellular location is the mitochondrion. Its function is as follows. Component of the mitochondrial ribosome (mitoribosome), a dedicated translation machinery responsible for the synthesis of mitochondrial genome-encoded proteins, including at least some of the essential transmembrane subunits of the mitochondrial respiratory chain. The mitoribosomes are attached to the mitochondrial inner membrane and translation products are cotranslationally integrated into the membrane. This Saccharomyces cerevisiae (strain ATCC 204508 / S288c) (Baker's yeast) protein is Large ribosomal subunit protein mL41 (MRPL27).